The primary structure comprises 411 residues: Prostaglandin E2 receptor EP3 subtype (411 aa).

The Extracellular portion of the chain corresponds to 1-49; sequence MKETRGDGGSAPFCTRLNHSYPGMWAPEARGNLTRPPGPGEDCGSVSVA. N18 and N32 each carry an N-linked (GlcNAc...) asparagine glycan. A helical membrane pass occupies residues 50 to 74; sequence FPITMLITGFVGNALAMLLVSRSYR. The Cytoplasmic segment spans residues 75–87; that stretch reads RRESKRKKSFLLC. The helical transmembrane segment at 88–108 threads the bilayer; sequence IGWLALTDLVGQLLTSPVVIL. At 109–127 the chain is on the extracellular side; sequence VYLSKQRWEQLDPSGRLCT. C126 and C204 are disulfide-bonded. Residues 128 to 149 form a helical membrane-spanning segment; that stretch reads FFGLTMTVFGLSSLFIASAMAV. At 150-171 the chain is on the cytoplasmic side; it reads ERALAIRAPHWYASHMKTRATR. The chain crosses the membrane as a helical span at residues 172-193; sequence AVLLGVWLAVLAFALLPVLGVG. The Extracellular portion of the chain corresponds to 194–223; that stretch reads QYTIQWPGTWCFISTGRGDNGTSSSHNWGN. N-linked (GlcNAc...) asparagine glycosylation occurs at N213. Residues 224 to 249 traverse the membrane as a helical segment; it reads LFFASTFAFLGLLALAITFTCNLATI. Topologically, residues 250–279 are cytoplasmic; the sequence is KALVSRCRAKAAASQSSAQWGRITTETAIQ. A helical transmembrane segment spans residues 280–303; that stretch reads LMGIMCVLSVCWSPLLIMMLKMIF. Residues 304-323 are Extracellular-facing; sequence NQTSVEHCKTDTGKQKECNF. A helical transmembrane segment spans residues 324–345; the sequence is FLIAVRLASLNQILDPWVYLLL. The Cytoplasmic segment spans residues 346–411; that stretch reads RKILLRKFCQ…ADPGARPYQQ (66 aa). Basic and acidic residues predominate over residues 367–390; sequence IQRENRNVSHSGQHEEARDSEKSK. The interval 367–392 is disordered; sequence IQRENRNVSHSGQHEEARDSEKSKTI.

The protein belongs to the G-protein coupled receptor 1 family. In terms of assembly, interacts (via C-terminus) with MKLN1. As to expression, in the kidney cortex and medulla, adrenal gland and stomach. In kidney, expression is higher in tubules in the outer medulla, with lower levels in cortex. In kidney cortex, expression is restricted to distal tubules.

It localises to the cell membrane. Receptor for prostaglandin E2 (PGE2). Required for normal development of fever in response to pyrinogens, including IL1B, prostaglandin E2 and bacterial lipopolysaccharide (LPS). Required for normal potentiation of platelet aggregation by prostaglandin E2, and thus plays a role in the regulation of blood coagulation. Required for increased HCO3(-) secretion in the duodenum in response to mucosal acidification, and thereby contributes to the protection of the mucosa against acid-induced ulceration. Not required for normal kidney function, normal urine volume and osmolality. The chain is Prostaglandin E2 receptor EP3 subtype (PTGER3) from Oryctolagus cuniculus (Rabbit).